We begin with the raw amino-acid sequence, 182 residues long: Translation initiation factor IF-3 (182 aa).

The interval 1-22 (MPLGDCNISTPDNKQNRKNQEI) is disordered.

This sequence belongs to the IF-3 family. In terms of assembly, monomer.

It is found in the cytoplasm. In terms of biological role, IF-3 binds to the 30S ribosomal subunit and shifts the equilibrium between 70S ribosomes and their 50S and 30S subunits in favor of the free subunits, thus enhancing the availability of 30S subunits on which protein synthesis initiation begins. This chain is Translation initiation factor IF-3, found in Xanthomonas axonopodis pv. citri (strain 306).